We begin with the raw amino-acid sequence, 287 residues long: uncharacterized protein (287 aa).

GTP is bound by residues 43-50 (GKTGVGKS), 90-93 (DLPG), and 156-159 (DKAE). Residues 48–138 (GKSSLCNALF…LTVDEHFYHQ (91 aa)) enclose the G domain.

The protein to E.coli YfjP and YeeP.

This is an uncharacterized protein from Escherichia coli (strain K12).